We begin with the raw amino-acid sequence, 183 residues long: ADP-ribosylation factor 3 (183 aa).

Gly2 carries N-myristoyl glycine lipidation. GTP-binding positions include 24–31 (GLDKAGKT), 67–71 (DVGGQ), and 126–129 (NKQD).

Belongs to the small GTPase superfamily. Arf family. Interacts with RUD3.

The protein resides in the golgi apparatus. GTP-binding protein involved in protein trafficking; may modulate vesicle budding and uncoating within the Golgi apparatus. The chain is ADP-ribosylation factor 3 (ARF3) from Saccharomyces cerevisiae (strain ATCC 204508 / S288c) (Baker's yeast).